Reading from the N-terminus, the 908-residue chain is DNA mismatch repair protein MutS (908 aa).

662-669 (GPNMGGKS) lines the ATP pocket.

Belongs to the DNA mismatch repair MutS family.

This protein is involved in the repair of mismatches in DNA. It is possible that it carries out the mismatch recognition step. This protein has a weak ATPase activity. In Rhizobium etli (strain ATCC 51251 / DSM 11541 / JCM 21823 / NBRC 15573 / CFN 42), this protein is DNA mismatch repair protein MutS.